The chain runs to 656 residues: DNA ligase (656 aa).

Residues 32 to 36 (DAVYD) and 81 to 82 (SL) each bind NAD(+). Catalysis depends on K112, which acts as the N6-AMP-lysine intermediate. Residues R133, E167, and K306 each contribute to the NAD(+) site. The Zn(2+) site is built by C400, C403, C416, and C421. In terms of domain architecture, BRCT spans 577-656 (KSSSVFSDKT…ELLKRLKELD (80 aa)).

Belongs to the NAD-dependent DNA ligase family. LigA subfamily. Mg(2+) serves as cofactor. Mn(2+) is required as a cofactor.

The catalysed reaction is NAD(+) + (deoxyribonucleotide)n-3'-hydroxyl + 5'-phospho-(deoxyribonucleotide)m = (deoxyribonucleotide)n+m + AMP + beta-nicotinamide D-nucleotide.. Functionally, DNA ligase that catalyzes the formation of phosphodiester linkages between 5'-phosphoryl and 3'-hydroxyl groups in double-stranded DNA using NAD as a coenzyme and as the energy source for the reaction. It is essential for DNA replication and repair of damaged DNA. This chain is DNA ligase, found in Helicobacter pylori (strain J99 / ATCC 700824) (Campylobacter pylori J99).